A 408-amino-acid polypeptide reads, in one-letter code: NADH-quinone oxidoreductase subunit D (408 aa).

The protein belongs to the complex I 49 kDa subunit family. In terms of assembly, NDH-1 is composed of 14 different subunits. Subunits NuoB, C, D, E, F, and G constitute the peripheral sector of the complex.

The protein localises to the cell inner membrane. It catalyses the reaction a quinone + NADH + 5 H(+)(in) = a quinol + NAD(+) + 4 H(+)(out). Its function is as follows. NDH-1 shuttles electrons from NADH, via FMN and iron-sulfur (Fe-S) centers, to quinones in the respiratory chain. The immediate electron acceptor for the enzyme in this species is believed to be ubiquinone. Couples the redox reaction to proton translocation (for every two electrons transferred, four hydrogen ions are translocated across the cytoplasmic membrane), and thus conserves the redox energy in a proton gradient. The chain is NADH-quinone oxidoreductase subunit D from Campylobacter jejuni subsp. jejuni serotype O:23/36 (strain 81-176).